Here is an 83-residue protein sequence, read N- to C-terminus: Small ribosomal subunit protein uS17 (83 aa).

Belongs to the universal ribosomal protein uS17 family. In terms of assembly, part of the 30S ribosomal subunit.

Its function is as follows. One of the primary rRNA binding proteins, it binds specifically to the 5'-end of 16S ribosomal RNA. This is Small ribosomal subunit protein uS17 from Francisella philomiragia subsp. philomiragia (strain ATCC 25017 / CCUG 19701 / FSC 153 / O#319-036).